We begin with the raw amino-acid sequence, 396 residues long: MSSKTLAKFLEENLEDLKSKGLYNVIDPLESSNGPIITIGGKEYINLSSNNYLGLATDSRLQEAAIGAIHKYGVGAGAVRTINGTLDLHIKLEETIAKFKHTEAAIAYQSGFNCNMAAISAVMDKNDAILSDELNHASIIDGSRLSKAKIIVYKHSDMEDLRQKAIAAKESGLYNKLMVITDGVFSMDGDVAKLPEIVEIAEELDLMTYVDDAHGSGVLGKGAGTVKHFGLSDKVDFQIGTLSKAIGVIGGYVAGKQNLIDWLKVRSRPFLFSTALTPADAAACMRSIEILMESTELHDRLWENGRYLKQGLKELGFNIGESETPITPCIIGDEVLTQEFSKRLNEEGVYAKSIVFPTVAKGTGRVRNMPTAAHTKEMLDEAILKYEKVGKEMGII.

Glycine 111 to phenylalanine 112 is a binding site for pyridoxal 5'-phosphate. Histidine 136 contributes to the substrate binding site. Pyridoxal 5'-phosphate-binding positions include serine 186, aspartate 211–histidine 214, and threonine 241–lysine 244. Lysine 244 is modified (N6-(pyridoxal phosphate)lysine). Substrate is bound at residue threonine 358.

Belongs to the class-II pyridoxal-phosphate-dependent aminotransferase family. In terms of assembly, homodimer. Requires pyridoxal 5'-phosphate as cofactor.

This is Putative pyridoxal phosphate-dependent acyltransferase from Bacillus cereus (strain ATCC 14579 / DSM 31 / CCUG 7414 / JCM 2152 / NBRC 15305 / NCIMB 9373 / NCTC 2599 / NRRL B-3711).